The primary structure comprises 304 residues: Foldase protein PrsA (304 aa).

A signal peptide spans 1-19 (MKKKLLSVAAVASVFTLAA). Residue C20 is the site of N-palmitoyl cysteine attachment. The S-diacylglycerol cysteine moiety is linked to residue C20. The 92-residue stretch at 140–231 (KVEVKASHIL…FGYHIIKVTD (92 aa)) folds into the PpiC domain. The disordered stretch occupies residues 285–304 (FDLDKQEQQQMQQQMQQQQQ). Residues 292–304 (QQQMQQQMQQQQQ) are compositionally biased toward low complexity.

It belongs to the PrsA family.

It localises to the cell membrane. It catalyses the reaction [protein]-peptidylproline (omega=180) = [protein]-peptidylproline (omega=0). Functionally, plays a major role in protein secretion by helping the post-translocational extracellular folding of several secreted proteins. This Exiguobacterium sibiricum (strain DSM 17290 / CCUG 55495 / CIP 109462 / JCM 13490 / 255-15) protein is Foldase protein PrsA.